A 306-amino-acid chain; its full sequence is tRNA dimethylallyltransferase (306 aa).

ATP is bound at residue 11–18 (GPTAVGKS). Residue 13 to 18 (TAVGKS) participates in substrate binding. An interaction with substrate tRNA region spans residues 35–38 (DSIQ).

It belongs to the IPP transferase family. In terms of assembly, monomer. Mg(2+) serves as cofactor.

It catalyses the reaction adenosine(37) in tRNA + dimethylallyl diphosphate = N(6)-dimethylallyladenosine(37) in tRNA + diphosphate. Its function is as follows. Catalyzes the transfer of a dimethylallyl group onto the adenine at position 37 in tRNAs that read codons beginning with uridine, leading to the formation of N6-(dimethylallyl)adenosine (i(6)A). In Borreliella burgdorferi (strain ATCC 35210 / DSM 4680 / CIP 102532 / B31) (Borrelia burgdorferi), this protein is tRNA dimethylallyltransferase.